The chain runs to 157 residues: Large ribosomal subunit protein uL15 (157 aa).

A disordered region spans residues 1-40 (MKLHELSDNPGATKKRMRIGRGPGSGKGKMGGRGIKGQKS). A compositionally biased stretch (gly residues) spans 21–35 (RGPGSGKGKMGGRGI).

This sequence belongs to the universal ribosomal protein uL15 family. In terms of assembly, part of the 50S ribosomal subunit.

Its function is as follows. Binds to the 23S rRNA. The sequence is that of Large ribosomal subunit protein uL15 from Ruegeria pomeroyi (strain ATCC 700808 / DSM 15171 / DSS-3) (Silicibacter pomeroyi).